A 451-amino-acid chain; its full sequence is Portal protein (451 aa).

Belongs to the SPP1-like portal protein family. In terms of assembly, homododecamer.

Its subcellular location is the virion. Its function is as follows. Forms the portal vertex of the capsid. This portal plays critical roles in head assembly, genome packaging, neck/tail attachment, and genome ejection. The portal protein multimerizes as a single ring-shaped homododecamer arranged around a central channel. Binds to the terminase subunits to form the packaging machine. This chain is Portal protein, found in Clostridium phage phiCD119 (strain Clostridium difficile/United States/Govind/2006) (Bacteriophage phiCD119).